The chain runs to 95 residues: UPF0235 protein Ssed_1229 (95 aa).

The protein belongs to the UPF0235 family.

The sequence is that of UPF0235 protein Ssed_1229 from Shewanella sediminis (strain HAW-EB3).